Consider the following 207-residue polypeptide: Uracil phosphoribosyltransferase (207 aa).

5-phospho-alpha-D-ribose 1-diphosphate contacts are provided by residues R77, R102, and 129–137; that span reads DPMLATGGS. Residues I192 and 197 to 199 each bind uracil; that span reads GDA. Position 198 (D198) interacts with 5-phospho-alpha-D-ribose 1-diphosphate.

Belongs to the UPRTase family. Mg(2+) is required as a cofactor.

The catalysed reaction is UMP + diphosphate = 5-phospho-alpha-D-ribose 1-diphosphate + uracil. Its pathway is pyrimidine metabolism; UMP biosynthesis via salvage pathway; UMP from uracil: step 1/1. With respect to regulation, allosterically activated by GTP. Its function is as follows. Catalyzes the conversion of uracil and 5-phospho-alpha-D-ribose 1-diphosphate (PRPP) to UMP and diphosphate. This Mycobacterium marinum (strain ATCC BAA-535 / M) protein is Uracil phosphoribosyltransferase.